Here is a 179-residue protein sequence, read N- to C-terminus: Bifunctional protein PyrR (179 aa).

The PRPP-binding motif lies at 99–111; that stretch reads VILIDDVLYTGRT.

Belongs to the purine/pyrimidine phosphoribosyltransferase family. PyrR subfamily. In terms of assembly, homodimer and homohexamer; in equilibrium.

The enzyme catalyses UMP + diphosphate = 5-phospho-alpha-D-ribose 1-diphosphate + uracil. Regulates transcriptional attenuation of the pyrimidine nucleotide (pyr) operon by binding in a uridine-dependent manner to specific sites on pyr mRNA. This disrupts an antiterminator hairpin in the RNA and favors formation of a downstream transcription terminator, leading to a reduced expression of downstream genes. Functionally, also displays a weak uracil phosphoribosyltransferase activity which is not physiologically significant. The sequence is that of Bifunctional protein PyrR from Latilactobacillus sakei subsp. sakei (strain 23K) (Lactobacillus sakei subsp. sakei).